A 642-amino-acid polypeptide reads, in one-letter code: Chaperone protein DnaK (642 aa).

At T198 the chain carries Phosphothreonine; by autocatalysis. Residues E602–K642 form a disordered region. A compositionally biased stretch (low complexity) spans A603 to A613.

The protein belongs to the heat shock protein 70 family.

Acts as a chaperone. In Paramagnetospirillum magneticum (strain ATCC 700264 / AMB-1) (Magnetospirillum magneticum), this protein is Chaperone protein DnaK.